Reading from the N-terminus, the 302-residue chain is Large ribosomal subunit protein uL29m (302 aa).

Residues M1–A38 constitute a mitochondrion transit peptide. Residues E255–S302 are disordered.

The protein belongs to the universal ribosomal protein uL29 family. Component of the mitochondrial large ribosomal subunit. Mature mitochondrial ribosomes consist of a small (37S) and a large (54S) subunit. The 37S subunit contains at least 33 different proteins and 1 molecule of RNA (15S). The 54S subunit contains at least 45 different proteins and 1 molecule of RNA (21S).

It is found in the mitochondrion. In Pyricularia oryzae (strain 70-15 / ATCC MYA-4617 / FGSC 8958) (Rice blast fungus), this protein is Large ribosomal subunit protein uL29m (MRPL4).